Consider the following 345-residue polypeptide: RDS/peripherin-like protein xRDS36 (345 aa).

At 1–24 (MVLFKAKFSFQRRVKLAQTLWLLS) the chain is on the cytoplasmic side. Residues 25-43 (WLSVLVGCLTFGMGIFLKV) traverse the membrane as a helical segment. Residues 44–61 (QLWIHNEVMDNTTAHAVP) lie on the Lumenal side of the membrane. Asparagine 54 carries N-linked (GlcNAc...) asparagine glycosylation. Residues 62–80 (NTVITAGLVGILLGYFAGK) traverse the membrane as a helical segment. The Cytoplasmic portion of the chain corresponds to 81 to 99 (ISQASMDLTKYQRWKSFMM). A helical membrane pass occupies residues 100 to 123 (PFFFLAILSCIVCLAALVLSVALR). The Lumenal portion of the chain corresponds to 124 to 264 (GTLEESLKIG…LGYYTGIMAT (141 aa)). A glycan (N-linked (GlcNAc...) asparagine) is linked at asparagine 229. Residues 265 to 290 (NGAAVTLSFLLQASVLVSLRYVQTSM) form a helical membrane-spanning segment. Residues 291–345 (DKIRDPDDVEADTEGFLLEKGVMETVNSSLEKIKDLFKSNQVETAEGGGEGAAGS) are Cytoplasmic-facing.

The protein belongs to the PRPH2/ROM1 family. As to quaternary structure, homodimer; disulfide-linked. In terms of tissue distribution, rod specific.

Its subcellular location is the membrane. The protein is RDS/peripherin-like protein xRDS36 (rds36) of Xenopus laevis (African clawed frog).